A 178-amino-acid chain; its full sequence is Large ribosomal subunit protein uL6 (178 aa).

The protein belongs to the universal ribosomal protein uL6 family. Part of the 50S ribosomal subunit.

In terms of biological role, this protein binds to the 23S rRNA, and is important in its secondary structure. It is located near the subunit interface in the base of the L7/L12 stalk, and near the tRNA binding site of the peptidyltransferase center. In Limosilactobacillus fermentum (strain NBRC 3956 / LMG 18251) (Lactobacillus fermentum), this protein is Large ribosomal subunit protein uL6.